The primary structure comprises 593 residues: Probable serine/threonine-protein kinase samkB (593 aa).

The SAM domain occupies 29-93 (WNNEAVCEWL…SIFKKLKNNN (65 aa)). The interval 108–157 (ESNSINNSNNNNNNNNNNNNNNNNNNNNNNNNNNNNNNNNNNNNNNKIDT) is disordered. A compositionally biased stretch (low complexity) spans 113–153 (NNSNNNNNNNNNNNNNNNNNNNNNNNNNNNNNNNNNNNNNN). The Protein kinase domain maps to 186–438 (YKLIEEIGRG…SKQLLEAQWF (253 aa)). ATP contacts are provided by residues 192–200 (IGRGAFSIV) and Lys216. The active-site Proton acceptor is Asp313.

Belongs to the protein kinase superfamily. Ser/Thr protein kinase family.

The enzyme catalyses L-seryl-[protein] + ATP = O-phospho-L-seryl-[protein] + ADP + H(+). It catalyses the reaction L-threonyl-[protein] + ATP = O-phospho-L-threonyl-[protein] + ADP + H(+). The chain is Probable serine/threonine-protein kinase samkB (samkB) from Dictyostelium discoideum (Social amoeba).